Reading from the N-terminus, the 111-residue chain is MIGVVLVLASLLSVGGQLCQKQATRPLTTGGRRRHLMLWLGLALICMGAAMVLWLLVLQTLPVGIAYPMLSLNFVWVTLAAWKIWHEQVPPRHWLGVALIISGIIILGSAA.

3 helical membrane passes run 38-58 (LWLGLALICMGAAMVLWLLVL), 61-81 (LPVGIAYPMLSLNFVWVTLAA), and 91-111 (PRHWLGVALIISGIIILGSAA). The 70-residue stretch at 40–109 (LGLALICMGA…IISGIIILGS (70 aa)) folds into the EamA domain.

The protein belongs to the ArnE family. In terms of assembly, heterodimer of ArnE and ArnF.

The protein localises to the cell inner membrane. It participates in bacterial outer membrane biogenesis; lipopolysaccharide biosynthesis. In terms of biological role, translocates 4-amino-4-deoxy-L-arabinose-phosphoundecaprenol (alpha-L-Ara4N-phosphoundecaprenol) from the cytoplasmic to the periplasmic side of the inner membrane. In Salmonella paratyphi B (strain ATCC BAA-1250 / SPB7), this protein is Probable 4-amino-4-deoxy-L-arabinose-phosphoundecaprenol flippase subunit ArnE.